The sequence spans 485 residues: Glutamate--tRNA ligase 1 (485 aa).

The short motif at Pro-10–Asn-20 is the 'HIGH' region element. Residues Lys-252 to Arg-256 carry the 'KMSKS' region motif. Position 255 (Lys-255) interacts with ATP.

The protein belongs to the class-I aminoacyl-tRNA synthetase family. Glutamate--tRNA ligase type 1 subfamily. In terms of assembly, monomer.

It localises to the cytoplasm. It carries out the reaction tRNA(Glu) + L-glutamate + ATP = L-glutamyl-tRNA(Glu) + AMP + diphosphate. Functionally, catalyzes the attachment of glutamate to tRNA(Glu) in a two-step reaction: glutamate is first activated by ATP to form Glu-AMP and then transferred to the acceptor end of tRNA(Glu). In Thermoanaerobacter pseudethanolicus (strain ATCC 33223 / 39E) (Clostridium thermohydrosulfuricum), this protein is Glutamate--tRNA ligase 1.